The primary structure comprises 366 residues: Chorismate synthase (366 aa).

Residues arginine 48 and arginine 54 each contribute to the NADP(+) site. Residues 125-127 (RSS), 238-239 (NA), glycine 278, 293-297 (KPTSS), and arginine 319 contribute to the FMN site.

It belongs to the chorismate synthase family. Homotetramer. FMNH2 serves as cofactor.

The catalysed reaction is 5-O-(1-carboxyvinyl)-3-phosphoshikimate = chorismate + phosphate. It functions in the pathway metabolic intermediate biosynthesis; chorismate biosynthesis; chorismate from D-erythrose 4-phosphate and phosphoenolpyruvate: step 7/7. Functionally, catalyzes the anti-1,4-elimination of the C-3 phosphate and the C-6 proR hydrogen from 5-enolpyruvylshikimate-3-phosphate (EPSP) to yield chorismate, which is the branch point compound that serves as the starting substrate for the three terminal pathways of aromatic amino acid biosynthesis. This reaction introduces a second double bond into the aromatic ring system. This chain is Chorismate synthase, found in Burkholderia orbicola (strain MC0-3).